Reading from the N-terminus, the 2372-residue chain is Nonribosomal peptide synthase roqA (2372 aa).

Positions 217–610 (EHCRSQPDAE…VGRKDREVKI (394 aa)) are adenylation 1. Positions 723–745 (AASSHSSTREQPSNQRDKEDVEL) are disordered. The segment covering 725–736 (SSHSSTREQPSN) has biased composition (polar residues). Residues 750–823 (SAKENTLCSV…KIARCTAESK (74 aa)) enclose the Carrier 1 domain. S784 carries the post-translational modification O-(pantetheine 4'-phosphoryl)serine. The interval 856–1122 (EDIYPCTPLQ…FATFPFRTQL (267 aa)) is condensation 1. Residues 1290–1679 (QPNSEAVCAW…VGRKDTQVKL (390 aa)) form an adenylation 2 region. The region spanning 1819–1895 (KPTTEQERFV…LFCKHVILIQ (77 aa)) is the Carrier 2 domain. S1856 is subject to O-(pantetheine 4'-phosphoryl)serine. The condensation 2 stretch occupies residues 1962-2227 (TSNYTSTAIF…FNVLPCRIAI (266 aa)).

It functions in the pathway alkaloid biosynthesis. Functionally, dipeptide synthase; part of the gene cluster that mediates the biosynthesis of the mycotoxins roquefortine C and meleagrin. The first stage is catalyzed by the dipeptide synthase roqA which condenses histidine and tryptophan to produce histidyltryptophanyldiketopiperazine (HTD). HTD is then converted to roquefortine C through two possible pathways. In the first pathway, prenyltransferase roqD transforms HTD to the intermediate roquefortine D, which is in turn converted to roquefortine C by the cytochrome P450 monooxygenase roqR. In the second pathway, HTD is first converted to the intermediate dehydrohistidyltryptophanyldi-ketopiperazine (DHTD) by roqR which is then prenylated by roqD to form roquefortine C. Roquefortine C can be further transformed to meleagrin via three more reactions including oxydation to glandicolin A by roqM, which is further reduced to glandicoline B by roqO. Finally, glandicoline B is converted to meleagrin by the glandicoline B O-methyltransferase roqN. More studies identified further branching and additional metabolites produced by the roquefortine/meleagrin cluster, including roquefortine F, roquefortine L, roquefortine M, roquefortine N and neoxaline. The chain is Nonribosomal peptide synthase roqA from Penicillium rubens (strain ATCC 28089 / DSM 1075 / NRRL 1951 / Wisconsin 54-1255) (Penicillium chrysogenum).